A 1213-amino-acid polypeptide reads, in one-letter code: Oligopeptidase PhomG' (1213 aa).

Residue H447 coordinates Zn(2+). E448 is an active-site residue. Residues H451 and H454 each coordinate Zn(2+).

Belongs to the peptidase M3 family. In terms of assembly, monomer. It depends on Zn(2+) as a cofactor.

Its pathway is mycotoxin biosynthesis. Its function is as follows. Oligopeptidase; part of the gene cluster that mediates the biosynthesis of the phomopsins, a group of hexapeptide mycotoxins which infects lupins and causes lupinosis disease in livestock. Within the pathway, phomG and phomG' are probably involved in the processing of the phomA and phomA' precursors. The pathway starts with the processing of the precursor phomA by several endopeptidases including kexin proteases as well as the cluster-specific S41 family peptidase phomP1 and the oligopeptidase phomG to produce 10 identical copies of the hexapeptide Tyr-Val-Ile-Pro-Ile-Asp. After being excised from the precursor peptide, the core peptides are cyclized and modified post-translationally by enzymes encoded within the gene cluster. The timing and order of proteolysis of the phomA precursor and PTMs are still unknown. Two tyrosinase-like enzymes, phomQ1 and phomQ2, catalyze the chlorination and hydroxylation of Tyr, respectively. PhomYb, is proposed to be involved in the construction of the macrocyclic structure. The other 4 ustYa family proteins may be involved in PTMs that generate the unique structure of phomopsin A. PhomYa is required for the hydroxylation of C-beta of Tyr. PhomYc, phomYd, and phomYe are responsible for the biosynthesis of 2,3-dehydroisoleucine (dIle), 2,3-dehydroaspartic acid (dAsp), and 3,4-dehydroproline (dPro), respectively. While dIle formation by phomYc is indispensable for the installation of dAsp by phomYd, the order of the other PTMs have not been elucidated yet. Most of the biosynthetic enzymes likely have broad substrate specificity, and thus, there might be a metabolic grid from a precursor to phomopsin A. The enzyme(s) responsible for the biosynthesis of 3,4-dehydrovaline (dVal) have also not been identified yet. Finally, phomM acts as an S-adenosylmethionine-dependent alpha-N-methyltransferase that catalyzes two successive N-methylation reactions, converting N-desmethyl-phomopsin A to phomopsin A and phomopsin A further to an N,N-dimethylated congener called phomopsin E. This Diaporthe leptostromiformis (Lupinosis disease fungus) protein is Oligopeptidase PhomG'.